The following is a 127-amino-acid chain: Small ribosomal subunit protein uS11 (127 aa).

The protein belongs to the universal ribosomal protein uS11 family. As to quaternary structure, part of the 30S ribosomal subunit. Interacts with proteins S7 and S18. Binds to IF-3.

In terms of biological role, located on the platform of the 30S subunit, it bridges several disparate RNA helices of the 16S rRNA. Forms part of the Shine-Dalgarno cleft in the 70S ribosome. This chain is Small ribosomal subunit protein uS11, found in Pelodictyon phaeoclathratiforme (strain DSM 5477 / BU-1).